Here is a 716-residue protein sequence, read N- to C-terminus: MSTTTGPEAAPKPSAKSIYEQRKRYSTVVMADVSQYHVNHLVTFCLGEEDGVHTVEDASRKLAVMDSQGRVWAQEMLLRVSPSQVTLLDPVSKEELESYPLDAIVRCDAVMPRGRSRSLLLLVCQEPERAQPDVHFFQGLLLGAELIREDIQGALQNYRSGRGERRAAALRATQEELRRGASPAAETPPLQRRPSVRLVINTVEPSAVRGRPQVESIPETEEARKPDQARTTSSADPTSPDLGPRGPELAGLQAERDVDILNHVFDDVESFVSRLQKSAEATRVLEHRERGRRTRRRAAGEGLLTLRAKPPTEAEYTDVLQKIKYAFSLLARLRGNIANPSSPELLHFLFGPLQMIVNTSGGPEFAKSVRRPHLTLEAVTLLRDNVTPGENELWTSLGDSWTCPGVELPPEEGSPYSPEFYNGWEPPATDPQGRPWEDPVEKQLQHEKRRRQQSAPQVAVNGQQDPELETESQLEEKARKWVLCNYDFQARNGSELSVKHRDVLEVLDDRRKWWKVRDHQGQEGYVPYNILTPHPGPQVHRSQSPARHLETSTPPPPPAPAPAPTQVRPQWDSCDSLNSLDPSEKEKFSQMLCVNEELQSRLAQGRSGPSRVTPGPRAQEPQLSPRSEASVVRAWLQTKGFSSGTVEALGVLTGAQLFSLQKEELRAVCPEEGARVYSQVTVQRALLEDREKVSELEAVMEKQKKKVEGETKTEVI.

Residues 35-164 (QYHVNHLVTF…LQNYRSGRGE (130 aa)) enclose the PTB domain. 5 disordered regions span residues 175-194 (EELR…QRRP), 203-249 (VEPS…GPEL), 404-472 (PGVE…ETES), 528-582 (YNIL…SLDP), and 600-628 (SRLA…PRSE). Position 182 is a phosphoserine (serine 182). Threonine 187 bears the Phosphothreonine mark. The segment covering 435 to 446 (PWEDPVEKQLQH) has biased composition (basic and acidic residues). Positions 453 to 464 (QSAPQVAVNGQQ) are enriched in polar residues. The SH3 domain maps to 477–536 (KARKWVLCNYDFQARNGSELSVKHRDVLEVLDDRRKWWKVRDHQGQEGYVPYNILTPHPG). Residues 553 to 563 (TPPPPPAPAPA) are compositionally biased toward pro residues. Positions 682–713 (VQRALLEDREKVSELEAVMEKQKKKVEGETKT) form a coiled coil.

This sequence belongs to the EPS8 family. Interacts with ABI1. Part of a complex that contains SOS1, ABI1 and EPS8L2. Associates with F-actin. In terms of tissue distribution, detected in placenta, skin, mammary gland, bone marrow and stomach.

It localises to the cytoplasm. In terms of biological role, stimulates guanine exchange activity of SOS1. May play a role in membrane ruffling and remodeling of the actin cytoskeleton. The chain is Epidermal growth factor receptor kinase substrate 8-like protein 1 (Eps8l1) from Mus musculus (Mouse).